The sequence spans 46 residues: Apamin (46 aa).

An N-terminal signal peptide occupies residues 1–27 (MISMLRCISLFLSVILITGYFVTPVMS). Disulfide bonds link Cys-28–Cys-38 and Cys-30–Cys-42. Residues 40–41 (RR) form an essential for toxin activity region. Residue His-45 is modified to Histidine amide.

In terms of tissue distribution, expressed by the venom gland.

The protein resides in the secreted. In terms of biological role, neurotoxin that blocks voltage-independent calcium-activated potassium channels (KCNN1=SK1, KCNN2=SK2, KCNN3=SK3). The sequence is that of Apamin from Apis cerana cerana (Oriental honeybee).